Here is a 205-residue protein sequence, read N- to C-terminus: MLTEKLILASASPRRAELLQLLGVDFEVIPSHMDETSRNDETPPEHVQRLSSEKAEMIAALFPDALVLGADTVVVIAGRMLGKPGNPGEARDMLKRLSGREHIVYTGFSLIQKKKGRRRTQVVRSAVLFKEIPEDEISWYVSSEEPYDKAGGYAVQGMGAFFIREIRGSYTNVMGLPLSEVVETLKDMGSLTFSGDQHDRGSNQE.

Aspartate 71 acts as the Proton acceptor in catalysis.

This sequence belongs to the Maf family. YhdE subfamily. The cofactor is a divalent metal cation.

It localises to the cytoplasm. The enzyme catalyses dTTP + H2O = dTMP + diphosphate + H(+). The catalysed reaction is UTP + H2O = UMP + diphosphate + H(+). Nucleoside triphosphate pyrophosphatase that hydrolyzes dTTP and UTP. May have a dual role in cell division arrest and in preventing the incorporation of modified nucleotides into cellular nucleic acids. The chain is dTTP/UTP pyrophosphatase from Syntrophus aciditrophicus (strain SB).